Reading from the N-terminus, the 210-residue chain is Ribonuclease HII (210 aa).

Positions 18 to 210 (GLIAGVDEVG…FKPVKALLGL (193 aa)) constitute an RNase H type-2 domain. The a divalent metal cation site is built by Asp24, Glu25, and Asp116.

This sequence belongs to the RNase HII family. The cofactor is Mn(2+). Mg(2+) serves as cofactor.

The protein resides in the cytoplasm. The catalysed reaction is Endonucleolytic cleavage to 5'-phosphomonoester.. Endonuclease that specifically degrades the RNA of RNA-DNA hybrids. This is Ribonuclease HII from Shewanella baltica (strain OS155 / ATCC BAA-1091).